Consider the following 79-residue polypeptide: Neurotoxin ShK-like1 (79 aa).

An N-terminal signal peptide occupies residues 1-25 (MSRKLLAVLMVCTFFLIAASMGTNA). A propeptide spanning residues 26-35 (LPFHEGIERR) is cleaved from the precursor. A ShKT domain is found at 39-78 (CVDKMPFVCMRKDIPAICKNRNHRSYAFIMDVCRKTCGQC). 3 disulfide bridges follow: Cys39–Cys78, Cys47–Cys71, and Cys56–Cys75.

Expressed in nematocytes (in planulae and primary polyps). Is localized predominantly in the body column nematocytes and not in the tentacles (in primary polyps).

It is found in the nematocyst. Its subcellular location is the secreted. Functionally, neurotoxin. In vivo, induces contraction paralysis followed by death (within 2 hours) on zebrafish larvae. Also induces body contraction in Nematostella 11-dpf polyps. This is Neurotoxin ShK-like1 from Nematostella vectensis (Starlet sea anemone).